The following is a 136-amino-acid chain: MTKDKKKKDNVRYMDVEFNVSMHCNDCERKIARVISKFKGVETFVTDMINHKVVVRGKIDPNKLLKKLKKKTGKRVKIVVKEEKGEESSKENENVLEIDMESICLGDQSMFGFCDWEMEKFMVFSDENVKAICSIS.

The HMA domain maps to 13–77 (YMDVEFNVSM…LKKKTGKRVK (65 aa)). Residues C24 and C27 each contribute to the a metal cation site. Residue C133 is modified to Cysteine methyl ester. C133 carries the S-farnesyl cysteine lipid modification. The propeptide at 134–136 (SIS) is removed in mature form.

This sequence belongs to the HIPP family.

Functionally, heavy-metal-binding protein. This is Heavy metal-associated isoprenylated plant protein 19 from Arabidopsis thaliana (Mouse-ear cress).